Reading from the N-terminus, the 458-residue chain is Hyaluronidase conohyal-P1 (458 aa).

The signal sequence occupies residues 1-18 (MRVVVVVTGLVVVVVATA). The segment at 24–47 (HDVKSASSPLSSSSVYQGSSGDDC) is disordered. The span at 28-43 (SASSPLSSSSVYQGSS) shows a compositional bias: low complexity. Residues Cys68 and Cys342 are joined by a disulfide bond. Asn106 and Asn141 each carry an N-linked (GlcNAc...) asparagine glycan. Glu151 (proton donor) is an active-site residue. 3 N-linked (GlcNAc...) asparagine glycosylation sites follow: Asn261, Asn337, and Asn359. Residues 363–434 (VMADCSTTLC…VRPSRCHKQQ (72 aa)) enclose the EGF-like domain. Intrachain disulfides connect Cys367–Cys378, Cys372–Cys411, and Cys413–Cys422.

This sequence belongs to the glycosyl hydrolase 56 family. As to expression, expressed by the venom duct.

The protein localises to the secreted. The enzyme catalyses Random hydrolysis of (1-&gt;4)-linkages between N-acetyl-beta-D-glucosamine and D-glucuronate residues in hyaluronate.. Functionally, hyaluronidase catalyzes the hydrolysis of hyaluronic acid (HA), an anionic, nonsulfated glycosaminoglycan distributed widely throughout connective, epithelial, and neural tissues. In venom, they are known to enhance diffusion of the venom by degrading the extracellular matrix. This Conus purpurascens (Purple cone) protein is Hyaluronidase conohyal-P1.